We begin with the raw amino-acid sequence, 852 residues long: Thrombospondin type-1 domain-containing protein 1 (852 aa).

An N-terminal signal peptide occupies residues 1 to 24; it reads MKPMLKDFSNLLLVVLCDYVLGEA. The Extracellular portion of the chain corresponds to 25 to 413; it reads EYLLLREPGH…QPQGPVKSNN (389 aa). N-linked (GlcNAc...) asparagine glycans are attached at residues Asn-39, Asn-53, Asn-58, Asn-69, Asn-80, Asn-135, and Asn-304. Residues 340-393 enclose the TSP type-1 domain; it reads TETWGLWQPWSQCSATCGDGVRERRRVCLTSFPSSPVCPGMSLEASLCSLEECA. Cystine bridges form between Cys-352–Cys-387, Cys-356–Cys-392, and Cys-367–Cys-377. The helical transmembrane segment at 414–434 threads the bilayer; the sequence is IVTVTGISLCLFIIIATVLIT. Residues 435-852 lie on the Cytoplasmic side of the membrane; sequence LWRRFGRPAK…STLSVEKLVI (418 aa). Disordered stretches follow at residues 444-517 and 624-799; these read KCST…ESFQ and LIRK…RKDK. Residue Ser-463 is modified to Phosphoserine. Over residues 645-654 the composition is skewed to basic residues; the sequence is ARNAHFRRTA. Positions 655-669 are enriched in basic and acidic residues; the sequence is SFHEARQARPFRERS. Positions 670-685 are enriched in polar residues; it reads MSTLTPRQAPAYSSRT. Basic and acidic residues predominate over residues 686-696; sequence RTCEQAEDRFR. 2 stretches are compositionally biased toward polar residues: residues 766–778 and 785–794; these read SHKSVSRKQSSPI and QRVSSLSPSQ.

Part of a complex composed of THSD1, PTK2/FAK1, TLN1 and VCL. Interacts with TLN1.

The protein resides in the endosome membrane. The protein localises to the cell junction. It localises to the focal adhesion. It is found in the membrane. Its subcellular location is the secreted. Functionally, is a positive regulator of nascent focal adhesion assembly, involved in the modulation of endothelial cell attachment to the extracellular matrix. The chain is Thrombospondin type-1 domain-containing protein 1 (THSD1) from Homo sapiens (Human).